The chain runs to 384 residues: S-adenosylmethionine synthase (384 aa).

Histidine 15 is a binding site for ATP. A Mg(2+)-binding site is contributed by aspartate 17. Glutamate 43 contributes to the K(+) binding site. Glutamate 56 and glutamine 99 together coordinate L-methionine. The flexible loop stretch occupies residues 99–109 (QSPDINQGVDR). Residues 164 to 166 (DAK), 231 to 232 (RF), aspartate 240, 246 to 247 (RK), alanine 263, and lysine 267 contribute to the ATP site. Residue aspartate 240 participates in L-methionine binding. Lysine 271 contributes to the L-methionine binding site.

Belongs to the AdoMet synthase family. In terms of assembly, homotetramer; dimer of dimers. The cofactor is Mg(2+). Requires K(+) as cofactor.

It localises to the cytoplasm. The catalysed reaction is L-methionine + ATP + H2O = S-adenosyl-L-methionine + phosphate + diphosphate. It functions in the pathway amino-acid biosynthesis; S-adenosyl-L-methionine biosynthesis; S-adenosyl-L-methionine from L-methionine: step 1/1. Functionally, catalyzes the formation of S-adenosylmethionine (AdoMet) from methionine and ATP. The overall synthetic reaction is composed of two sequential steps, AdoMet formation and the subsequent tripolyphosphate hydrolysis which occurs prior to release of AdoMet from the enzyme. The polypeptide is S-adenosylmethionine synthase (Shewanella piezotolerans (strain WP3 / JCM 13877)).